Reading from the N-terminus, the 316-residue chain is Olfactory receptor 51J1 (316 aa).

Residues 1–31 lie on the Extracellular side of the membrane; that stretch reads MKISNNSLGFLPTTFILVGIPGLESEHLWIS. N5 carries N-linked (GlcNAc...) asparagine glycosylation. The helical transmembrane segment at 32–52 threads the bilayer; sequence VPFSLIYIIIFLGNGIILHVI. The Cytoplasmic portion of the chain corresponds to 53–63; sequence RTDIALHQPMY. Residues 64–84 traverse the membrane as a helical segment; it reads LFLAMLALAEVRVSASTLPTV. Residues 85-104 are Extracellular-facing; that stretch reads LGIFLFGNTEISLEACLFPD. C100 and C191 form a disulfide bridge. Residues 105 to 125 form a helical membrane-spanning segment; sequence VLHPFFIHDGASCAAGHVFGP. Residues 126 to 161 are Cytoplasmic-facing; that stretch reads LYSHLQPTELHSYPDTAQGLWHRSYYRTEKHYAHGS. The chain crosses the membrane as a helical span at residues 162 to 182; sequence VAHSLMASALLWPQCPLTFLL. Residues 183–191 lie on the Extracellular side of the membrane; sequence SAPQSYLSC. Residues 192–212 traverse the membrane as a helical segment; it reads GNISVNNIYGIFIVTSTFGLD. At 213-242 the chain is on the cytoplasmic side; it reads SLLIVISYGLILHTVLGIATGEGRKKALNT. Residues 243–263 form a helical membrane-spanning segment; it reads CGSHVCAVLAYYVPMIGLSIV. Residues 264 to 275 lie on the Extracellular side of the membrane; that stretch reads HRLGHRVSPLLQ. The helical transmembrane segment at 276–296 threads the bilayer; the sequence is AMMANAYLFFPPVVNPIVYSI. The Cytoplasmic segment spans residues 297–316; the sequence is KTKEIHGAIVRMLLEKRRRV.

The protein belongs to the G-protein coupled receptor 1 family.

It localises to the cell membrane. In terms of biological role, odorant receptor. This chain is Olfactory receptor 51J1 (OR51J1), found in Homo sapiens (Human).